A 687-amino-acid chain; its full sequence is Putative lipase YDR444W (687 aa).

Residue S284 is the Charge relay system of the active site. 3 disordered regions span residues 429–472 (IRKK…AESP), 491–513 (KINKYKRGQTNEANSDSDNEQGV), and 650–687 (ELAEDANEPKDEPNQSSQADRSNEYNEGEISKGAENAT). Residues 436–463 (SPTSSEFVSSDSPESSGASSPSNENGNN) show a composition bias toward low complexity. A compositionally biased stretch (basic and acidic residues) spans 670 to 681 (RSNEYNEGEISK).

The protein belongs to the putative lipase ROG1 family.

It is found in the cytoplasm. The polypeptide is Putative lipase YDR444W (Saccharomyces cerevisiae (strain ATCC 204508 / S288c) (Baker's yeast)).